The chain runs to 750 residues: Serine/threonine-protein kinase PknG (750 aa).

The disordered stretch occupies residues 1–66 (MAKASETERS…PQDRMATTSR (66 aa)). Over residues 17–34 (ADAQTATSATVRPLSTQA) the composition is skewed to polar residues. Residues 151–396 (YEVKGCIAHG…EMSAQLTGVL (246 aa)) form the Protein kinase domain. Residues 157–165 (IAHGGLGWI) and Lys181 contribute to the ATP site. Asp276 acts as the Proton acceptor in catalysis.

It belongs to the protein kinase superfamily. Ser/Thr protein kinase family. Autophosphorylated.

The catalysed reaction is L-seryl-[protein] + ATP = O-phospho-L-seryl-[protein] + ADP + H(+). It catalyses the reaction L-threonyl-[protein] + ATP = O-phospho-L-threonyl-[protein] + ADP + H(+). This chain is Serine/threonine-protein kinase PknG (pknG), found in Mycobacterium bovis (strain ATCC BAA-935 / AF2122/97).